The following is an 88-amino-acid chain: Putative membrane protein insertion efficiency factor (88 aa).

This sequence belongs to the UPF0161 family.

The protein localises to the cell inner membrane. Functionally, could be involved in insertion of integral membrane proteins into the membrane. This Rickettsia canadensis (strain McKiel) protein is Putative membrane protein insertion efficiency factor.